The sequence spans 343 residues: ATP phosphoribosyltransferase regulatory subunit (343 aa).

The tract at residues 324–343 is disordered; that stretch reads RANGRAKRPARPRRSPPRPR. Basic residues predominate over residues 327 to 343; it reads GRAKRPARPRRSPPRPR.

The protein belongs to the class-II aminoacyl-tRNA synthetase family. HisZ subfamily. In terms of assembly, heteromultimer composed of HisG and HisZ subunits.

The protein resides in the cytoplasm. Its pathway is amino-acid biosynthesis; L-histidine biosynthesis; L-histidine from 5-phospho-alpha-D-ribose 1-diphosphate: step 1/9. Its function is as follows. Required for the first step of histidine biosynthesis. May allow the feedback regulation of ATP phosphoribosyltransferase activity by histidine. In Anaeromyxobacter sp. (strain Fw109-5), this protein is ATP phosphoribosyltransferase regulatory subunit.